The sequence spans 265 residues: NAD kinase 2 (265 aa).

Catalysis depends on Asp51, which acts as the Proton acceptor. NAD(+)-binding positions include 51–52 (DG), 122–123 (NE), Arg149, Asp151, 162–167 (TAYNKS), and Ala186.

Belongs to the NAD kinase family. It depends on a divalent metal cation as a cofactor.

The protein localises to the cytoplasm. The catalysed reaction is NAD(+) + ATP = ADP + NADP(+) + H(+). Involved in the regulation of the intracellular balance of NAD and NADP, and is a key enzyme in the biosynthesis of NADP. Catalyzes specifically the phosphorylation on 2'-hydroxyl of the adenosine moiety of NAD to yield NADP. The sequence is that of NAD kinase 2 from Bacillus licheniformis (strain ATCC 14580 / DSM 13 / JCM 2505 / CCUG 7422 / NBRC 12200 / NCIMB 9375 / NCTC 10341 / NRRL NRS-1264 / Gibson 46).